Here is a 446-residue protein sequence, read N- to C-terminus: Citrate/sodium symporter (446 aa).

The next 5 helical transmembrane spans lie at 23–43 (IFGM…LSHF), 46–66 (AIPT…AIFG), 79–99 (IGGA…AGIF), 110–130 (VMDK…GAIL), and 148–168 (ILAG…CFGI). Residues Ile-181 and Gly-183 each contribute to the Na(+) site. 2 residues coordinate citrate: Asn-186 and Gly-187. Transmembrane regions (helical) follow at residues 213–233 (IAIL…LDMI), 267–287 (ETAV…VVAK), 289–309 (ILPS…LIVA), 335–355 (QLLW…QEII), and 364–384 (VIAA…GWLI). Residues Met-399 and Asn-401 each coordinate Na(+). Positions 402, 404, 405, and 428 each coordinate citrate. Residues 425–445 (ISSRLGGGIVLVIASIVFSMM) traverse the membrane as a helical segment.

The protein belongs to the 2-hydroxycarboxylate transporter (2-HCT) (TC 2.A.24) family. Homodimer.

The protein resides in the cell inner membrane. The catalysed reaction is citrate(out) + 2 Na(+)(out) = citrate(in) + 2 Na(+)(in). Its function is as follows. Secondary active transporter that catalyzes the uptake of citrate across the membrane with the concomitant uptake of sodium. Is specific for citrate. The polypeptide is Citrate/sodium symporter (Salmonella dublin).